A 125-amino-acid polypeptide reads, in one-letter code: Protein ApaG (125 aa).

Residues Met1–His125 form the ApaG domain.

This chain is Protein ApaG, found in Yersinia pestis bv. Antiqua (strain Antiqua).